A 102-amino-acid polypeptide reads, in one-letter code: Secretoglobin family 1D member (102 aa).

A signal peptide spans 1-21; sequence MRLSVTALLVTLALCYYEANA. N87 carries an N-linked (GlcNAc...) asparagine glycan.

It belongs to the secretoglobin family. Lipophilin subfamily.

It is found in the secreted. Its function is as follows. May bind androgens and other steroids. May be under transcriptional regulation of steroid hormones. This chain is Secretoglobin family 1D member (SCGB1D), found in Bos taurus (Bovine).